A 739-amino-acid chain; its full sequence is Eukaryotic translation initiation factor 3 subunit B (739 aa).

Residues 39–125 enclose the RRM domain; it reads AFVVIDGLPV…HTLAVNKLTD (87 aa). WD repeat units lie at residues 191-229, 231-288, 457-498, 516-559, and 574-612; these read RDHWTQLFVQWSPLGTYLASVHPQGVQLWGGPQFGKQKQ, PHPF…RSFV, SLKD…SFFA, IEKK…EKPE, and NEHFGVTDIDWDPTGRYVVSSASAWTHSLENGYHIHTFS.

This sequence belongs to the eIF-3 subunit B family. In terms of assembly, component of the eukaryotic translation initiation factor 3 (eIF-3) complex.

The protein localises to the cytoplasm. RNA-binding component of the eukaryotic translation initiation factor 3 (eIF-3) complex, which is involved in protein synthesis of a specialized repertoire of mRNAs and, together with other initiation factors, stimulates binding of mRNA and methionyl-tRNAi to the 40S ribosome. The eIF-3 complex specifically targets and initiates translation of a subset of mRNAs involved in cell proliferation. The protein is Eukaryotic translation initiation factor 3 subunit B of Coccidioides immitis (strain RS) (Valley fever fungus).